Consider the following 193-residue polypeptide: dTTP/UTP pyrophosphatase (193 aa).

Aspartate 75 serves as the catalytic Proton acceptor.

Belongs to the Maf family. YhdE subfamily. It depends on a divalent metal cation as a cofactor.

The protein localises to the cytoplasm. The catalysed reaction is dTTP + H2O = dTMP + diphosphate + H(+). It catalyses the reaction UTP + H2O = UMP + diphosphate + H(+). Its function is as follows. Nucleoside triphosphate pyrophosphatase that hydrolyzes dTTP and UTP. May have a dual role in cell division arrest and in preventing the incorporation of modified nucleotides into cellular nucleic acids. This is dTTP/UTP pyrophosphatase from Chlorobium luteolum (strain DSM 273 / BCRC 81028 / 2530) (Pelodictyon luteolum).